A 284-amino-acid polypeptide reads, in one-letter code: Phospholipid phosphatase 1 (284 aa).

At 1 to 6 (MFDKTR) the chain is on the cytoplasmic side. The PDZ-binding; involved in localization to the apical cell membrane signature appears at 5 to 7 (TRL). The helical transmembrane segment at 7-27 (LPYVALDVLCVLLAGLPFAIL) threads the bilayer. Over 28–53 (TSRHTPFQRGVFCNDESIKYPYKEDT) the chain is Extracellular. A helical membrane pass occupies residues 54–74 (IPYALLGGIIIPFSIIVIILG). The Cytoplasmic segment spans residues 75 to 94 (ETLSVYCNLLHSNSFIRNNY). Residues 95-115 (IATIYKAIGTFLFGAAASQSL) form a helical membrane-spanning segment. Over 116-164 (TDIAKYSIGRLRPHFLDVCDPDWSKINCSDGYIEYYICRGNAERVKEGR) the chain is Extracellular. A phosphatase sequence motif I region spans residues 120-128 (KYSIGRLRP). Residue Asn-142 is glycosylated (N-linked (GlcNAc...) asparagine). A helical transmembrane segment spans residues 165–185 (LSFYSGHSSFSMYCMLFVALY). Residues 168-171 (YSGH) are phosphatase sequence motif II. Residue His-171 is the Proton donors of the active site. Topologically, residues 186 to 199 (LQARMKGDWARLLR) are cytoplasmic. The helical transmembrane segment at 200 to 220 (PTLQFGLVAVSIYVGLSRVSD) threads the bilayer. A phosphatase sequence motif III region spans residues 216 to 227 (SRVSDYKHHWSD). Residues 221 to 229 (YKHHWSDVL) are Extracellular-facing. The active-site Nucleophile is the His-223. The helical transmembrane segment at 230-250 (TGLIQGALVAILVAVYVSDFF) threads the bilayer. At 251-284 (KERTSFKERKEEDSHTTLHETPTTGNHYPSNHQP) the chain is on the cytoplasmic side. Positions 260-284 (KEEDSHTTLHETPTTGNHYPSNHQP) are disordered. Polar residues predominate over residues 269 to 284 (HETPTTGNHYPSNHQP).

The protein belongs to the PA-phosphatase related phosphoesterase family. As to quaternary structure, forms functional homodimers and homooligomers that are not required for substrate recognition and catalytic activity. Can also form heterooligomers with PLPP2 and PLPP3. Post-translationally, N-glycosylated. N-linked sugars are of the complex type. N-glycosylation is not required for the phosphatase activity. In terms of tissue distribution, widely expressed with highest expression found in prostate. Found to be down-regulated in colon adenocarcinomas. Predominant in kidney, lung, placenta and liver. As to expression, predominant in heart and pancreas.

It localises to the cell membrane. It is found in the apical cell membrane. Its subcellular location is the membrane raft. The protein resides in the membrane. The protein localises to the caveola. The enzyme catalyses a 1,2-diacyl-sn-glycero-3-phosphate + H2O = a 1,2-diacyl-sn-glycerol + phosphate. It carries out the reaction 1,2-dihexadecanoyl-sn-glycero-3-phosphate + H2O = 1,2-dihexadecanoyl-sn-glycerol + phosphate. It catalyses the reaction 1,2-di-(9Z-octadecenoyl)-sn-glycero-3-phosphate + H2O = 1,2-di-(9Z-octadecenoyl)-sn-glycerol + phosphate. The catalysed reaction is a monoacyl-sn-glycero-3-phosphate + H2O = a monoacylglycerol + phosphate. The enzyme catalyses (9Z)-octadecenoyl-sn-glycero-3-phosphate + H2O = (9Z-octadecenoyl)-glycerol + phosphate. It carries out the reaction a 1-acyl-sn-glycero-3-phosphate + H2O = a 1-acyl-sn-glycerol + phosphate. It catalyses the reaction 1-(9Z-octadecenoyl)-sn-glycero-3-phosphate + H2O = 1-(9Z-octadecenoyl)-sn-glycerol + phosphate. The catalysed reaction is a 1,2-diacyl-sn-glycerol 3-diphosphate + H2O = a 1,2-diacyl-sn-glycero-3-phosphate + phosphate + H(+). The enzyme catalyses sphing-4-enine 1-phosphate + H2O = sphing-4-enine + phosphate. It carries out the reaction an N-acylsphing-4-enine 1-phosphate + H2O = an N-acylsphing-4-enine + phosphate. It catalyses the reaction N-(octanoyl)-sphing-4-enine-1-phosphate + H2O = N-octanoylsphing-4-enine + phosphate. The catalysed reaction is N-(9Z-octadecenoyl)-ethanolamine phosphate + H2O = N-(9Z-octadecenoyl) ethanolamine + phosphate. The enzyme catalyses 1-hexadecanoyl-2-(9Z-octadecenoyl)-sn-glycero-3-phosphate + H2O = 1-hexadecanoyl-2-(9Z-octadecenoyl)-sn-glycerol + phosphate. It functions in the pathway lipid metabolism; phospholipid metabolism. Magnesium-independent phospholipid phosphatase. Insensitive to N-ethylmaleimide. Inhibited by sphingosine, zinc ions and modestly by propanolol. Inhibited by vanadate. Its function is as follows. Magnesium-independent phospholipid phosphatase of the plasma membrane that catalyzes the dephosphorylation of a variety of glycerolipid and sphingolipid phosphate esters including phosphatidate/PA, lysophosphatidate/LPA, diacylglycerol pyrophosphate/DGPP, sphingosine 1-phosphate/S1P and ceramide 1-phosphate/C1P. Also acts on N-oleoyl ethanolamine phosphate/N-(9Z-octadecenoyl)-ethanolamine phosphate, a potential physiological compound. Through its extracellular phosphatase activity allows both the hydrolysis and the cellular uptake of these bioactive lipid mediators from the milieu, regulating signal transduction in different cellular processes. It is for instance essential for the extracellular hydrolysis of S1P and subsequent conversion into intracellular S1P. Involved in the regulation of inflammation, platelets activation, cell proliferation and migration among other processes. May also have an intracellular activity to regulate phospholipid-mediated signaling pathways. This Homo sapiens (Human) protein is Phospholipid phosphatase 1.